Reading from the N-terminus, the 508-residue chain is 2'-5'-oligoadenylate synthase-like protein 2 (508 aa).

Residue serine 69 coordinates ATP. Residues aspartate 81, aspartate 83, and aspartate 154 each coordinate Mg(2+). The ATP site is built by arginine 213 and lysine 216. The Ubiquitin-like domain maps to 435-473 (ILVFVKYPGGQSKPFTIDPDDTILDLKEKIEDAGGPCAE).

This sequence belongs to the 2-5A synthase family. It depends on Mg(2+) as a cofactor. As to expression, strongly expressed in spleen dendritic cells, whereas, in bone marrow-derived dendritic cells, the amount increases during the maturation process. Expressed in many organs, the highest levels being in thymus, lung, and bone marrow.

The enzyme catalyses 3 ATP = 5'-triphosphoadenylyl-(2'-&gt;5')-adenylyl-(2'-&gt;5')-adenosine + 2 diphosphate. Produced as a latent enzyme which is activated by dsRNA generated during the course of viral infection. The dsRNA activator must be at least 15 nucleotides long, and no modification of the 2'-hydroxyl group is tolerated. ssRNA or dsDNA do not act as activators. In terms of biological role, interferon-induced, dsRNA-activated antiviral enzyme which plays a critical role in cellular innate antiviral response. Synthesizes oligomers of 2'-5'-oligoadenylates (2-5A) from ATP which then bind to the inactive monomeric form of ribonuclease L (RNase L) leading to its dimerization and subsequent activation. Activation of RNase L leads to degradation of cellular as well as viral RNA, resulting in the inhibition of protein synthesis, thus terminating viral replication. Can mediate the antiviral effect via the classical RNase L-dependent pathway or an alternative antiviral pathway independent of RNase L. The polypeptide is 2'-5'-oligoadenylate synthase-like protein 2 (Oasl2) (Mus musculus (Mouse)).